Here is a 345-residue protein sequence, read N- to C-terminus: Phosphate acyltransferase (345 aa).

Belongs to the PlsX family. In terms of assembly, homodimer. Probably interacts with PlsY.

It localises to the cytoplasm. The enzyme catalyses a fatty acyl-[ACP] + phosphate = an acyl phosphate + holo-[ACP]. The protein operates within lipid metabolism; phospholipid metabolism. In terms of biological role, catalyzes the reversible formation of acyl-phosphate (acyl-PO(4)) from acyl-[acyl-carrier-protein] (acyl-ACP). This enzyme utilizes acyl-ACP as fatty acyl donor, but not acyl-CoA. The polypeptide is Phosphate acyltransferase (Limosilactobacillus fermentum (strain NBRC 3956 / LMG 18251) (Lactobacillus fermentum)).